We begin with the raw amino-acid sequence, 276 residues long: Extracellular metalloprotease 1 (276 aa).

Residues 1 to 18 (MRVSVPVLALAFGSLAAA) form the signal peptide. Residue histidine 191 coordinates Zn(2+). Glutamate 192 is an active-site residue. Histidine 195 provides a ligand contact to Zn(2+). The disordered stretch occupies residues 211-233 (GDYVSDTPPQRSPSSGCPVGRDS). Residues cysteine 227 and cysteine 253 are joined by a disulfide bond.

The protein belongs to the peptidase M43B family.

Its subcellular location is the secreted. Functionally, secreted metalloproteinase that allows assimilation of proteinaceous substrates. Pays a pivotal role as a pathogenicity determinant during infections and contributes to the ability of the pathogen to persist within the mammalian host. Digests an immunodominant cell surface antigen (SOWgp) and prevents host recognition of endospores during the phase of development when these fungal cells are most vulnerable to phagocytic cell defenses. This chain is Extracellular metalloprotease 1 (MEP1), found in Coccidioides posadasii (strain C735) (Valley fever fungus).